The chain runs to 236 residues: ATP synthase subunit a (236 aa).

The next 5 membrane-spanning stretches (helical) occupy residues 17–37 (LANV…AVLA), 80–100 (MTLI…SVVI), 114–134 (VVTL…GIKL), 179–199 (ILLA…IAAI), and 208–228 (FSIF…MVYM).

Belongs to the ATPase A chain family. As to quaternary structure, F-type ATPases have 2 components, CF(1) - the catalytic core - and CF(0) - the membrane proton channel. CF(1) has five subunits: alpha(3), beta(3), gamma(1), delta(1), epsilon(1). CF(0) has three main subunits: a(1), b(2) and c(9-12). The alpha and beta chains form an alternating ring which encloses part of the gamma chain. CF(1) is attached to CF(0) by a central stalk formed by the gamma and epsilon chains, while a peripheral stalk is formed by the delta and b chains.

The protein resides in the cell membrane. Functionally, key component of the proton channel; it plays a direct role in the translocation of protons across the membrane. This Anoxybacillus flavithermus (strain DSM 21510 / WK1) protein is ATP synthase subunit a.